Reading from the N-terminus, the 483-residue chain is Nucleolar protein 4 (483 aa).

Disordered regions lie at residues glutamine 210–serine 418 and serine 435–isoleucine 483. Acidic residues predominate over residues glutamine 211–methionine 225. Composition is skewed to polar residues over residues threonine 229 to glycine 254, alanine 262 to leucine 271, and glutamine 302 to serine 317. 2 stretches are compositionally biased toward basic and acidic residues: residues phenylalanine 319–asparagine 330 and leucine 340–glycine 350. Positions serine 351–serine 363 are enriched in polar residues. 3 stretches are compositionally biased toward basic and acidic residues: residues glycine 364–glutamate 374, histidine 391–lysine 409, and serine 435–aspartate 451. Residues alanine 467–isoleucine 483 are compositionally biased toward polar residues.

The protein localises to the nucleus. The protein resides in the nucleolus. This Mus musculus (Mouse) protein is Nucleolar protein 4 (Nol4).